The primary structure comprises 712 residues: Anaerobic ribonucleoside-triphosphate reductase (712 aa).

The ATP-cone domain maps to 3 to 92 (PHVMKRDGCK…EYRHDRDIER (90 aa)). Residues 583 to 708 (KKVNPYDKID…VKRRVKHLGN (126 aa)) form the Glycine radical domain. Zn(2+)-binding residues include Cys644, Cys647, Cys662, and Cys665. Gly681 is modified (glycine radical).

This sequence belongs to the anaerobic ribonucleoside-triphosphate reductase family. Homodimer. Forms a tetramer composed of two NrdD and two NrdG subunits.

It carries out the reaction a ribonucleoside 5'-triphosphate + formate + H(+) = a 2'-deoxyribonucleoside 5'-triphosphate + CO2 + H2O. The catalysed reaction is formate + ATP + H(+) = dATP + CO2 + H2O. The enzyme catalyses CTP + formate + H(+) = dCTP + CO2 + H2O. It catalyses the reaction GTP + formate + H(+) = dGTP + CO2 + H2O. It carries out the reaction UTP + formate + H(+) = dUTP + CO2 + H2O. Activated under anaerobic conditions by NrdG, a tightly associated activase. Activation involves the formation of a glycyl radical at Gly-681. Exposure of the activated reductase to oxygen leads to C-terminal truncation and inactivation of the protein, by cleavage at the N-terminal side of Gly-681. The presence of zinc protects the protein from proteolysis and prevents the formation of disulfide bridges within it. The enzyme shows a basal activity in the absence of any effector, but reduction is stimulated up to 10-fold by an appropriate modulator (dGTP for ATP reduction, ATP for CTP and UTP reduction, and dTTP for GTP reduction). dGTP and dTTP inhibit the reduction of the incorrect substrate, and dATP inhibits reduction of all four. These modulators act as allosteric effectors. Its function is as follows. Catalyzes the conversion of ribonucleotides into deoxyribonucleotides, which are required for DNA synthesis and repair. Can reduce each of the four common ribonucleoside triphosphates. In Escherichia coli (strain K12), this protein is Anaerobic ribonucleoside-triphosphate reductase.